Reading from the N-terminus, the 365-residue chain is MILLNLMLYFCSMQTTSTEIKKKCIRSLSAEELKDFFVASGEKAFRSRQVYEWLWKRSARSFEQMTNLSKETRTLLENNFSINPVTISQKQVSTDGTIKFGFKLHDGYLVEGVLIPADDRMTACISSQVGCSLTCKFCATGYMDRKRNLEPYEIYDQVVLIKEAAEEHYQTPLTNIVLMGMGEPLLNYTNVLKGIDKVTSEEGLHIASKRITLSTAGIAKMITKLGDEKVKFRLALSLHAANDVKRNTIMPINETNNLNVLKESLLHFCKETGSSVTFEYIVFDGVNDTAQDAKELYAFAKNIPCKINIIEYNPIQEADFMNTSVDKLEQFKKVLTDKGIIVNIRRSRGKDIDAACGQLAIKEVK.

The Proton acceptor role is filled by glutamate 111. A Radical SAM core domain is found at 117 to 351; the sequence is ADDRMTACIS…VNIRRSRGKD (235 aa). A disulfide bridge links cysteine 124 with cysteine 356. [4Fe-4S] cluster is bound by residues cysteine 131, cysteine 135, and cysteine 138. Residues 182 to 183, serine 214, 237 to 239, and asparagine 313 each bind S-adenosyl-L-methionine; these read GE and SLH. Cysteine 356 functions as the S-methylcysteine intermediate in the catalytic mechanism.

Belongs to the radical SAM superfamily. RlmN family. The cofactor is [4Fe-4S] cluster.

It localises to the cytoplasm. The catalysed reaction is adenosine(2503) in 23S rRNA + 2 reduced [2Fe-2S]-[ferredoxin] + 2 S-adenosyl-L-methionine = 2-methyladenosine(2503) in 23S rRNA + 5'-deoxyadenosine + L-methionine + 2 oxidized [2Fe-2S]-[ferredoxin] + S-adenosyl-L-homocysteine. It carries out the reaction adenosine(37) in tRNA + 2 reduced [2Fe-2S]-[ferredoxin] + 2 S-adenosyl-L-methionine = 2-methyladenosine(37) in tRNA + 5'-deoxyadenosine + L-methionine + 2 oxidized [2Fe-2S]-[ferredoxin] + S-adenosyl-L-homocysteine. In terms of biological role, specifically methylates position 2 of adenine 2503 in 23S rRNA and position 2 of adenine 37 in tRNAs. This is Probable dual-specificity RNA methyltransferase RlmN from Cytophaga hutchinsonii (strain ATCC 33406 / DSM 1761 / CIP 103989 / NBRC 15051 / NCIMB 9469 / D465).